Consider the following 176-residue polypeptide: NAD(P)H-quinone oxidoreductase subunit J (176 aa).

Composition is skewed to polar residues over residues 1–12 (MEKDSQATSSDT) and 20–30 (ISQSLSKDGIP). The segment at 1–30 (MEKDSQATSSDTSIEKEGVISQSLSKDGIP) is disordered.

This sequence belongs to the complex I 30 kDa subunit family. As to quaternary structure, NDH-1 can be composed of about 15 different subunits; different subcomplexes with different compositions have been identified which probably have different functions.

The protein localises to the cellular thylakoid membrane. The catalysed reaction is a plastoquinone + NADH + (n+1) H(+)(in) = a plastoquinol + NAD(+) + n H(+)(out). It catalyses the reaction a plastoquinone + NADPH + (n+1) H(+)(in) = a plastoquinol + NADP(+) + n H(+)(out). In terms of biological role, NDH-1 shuttles electrons from an unknown electron donor, via FMN and iron-sulfur (Fe-S) centers, to quinones in the respiratory and/or the photosynthetic chain. The immediate electron acceptor for the enzyme in this species is believed to be plastoquinone. Couples the redox reaction to proton translocation, and thus conserves the redox energy in a proton gradient. Cyanobacterial NDH-1 also plays a role in inorganic carbon-concentration. The polypeptide is NAD(P)H-quinone oxidoreductase subunit J (Prochlorococcus marinus (strain AS9601)).